A 432-amino-acid chain; its full sequence is Adenylosuccinate synthetase (432 aa).

GTP contacts are provided by residues 13–19 (GDEGKGK) and 41–43 (GHT). The active-site Proton acceptor is the Asp-14. Residues Asp-14 and Gly-41 each contribute to the Mg(2+) site. IMP-binding positions include 14-17 (DEGK), 39-42 (NAGH), Thr-130, Arg-144, Gln-225, Thr-240, and Arg-304. Residue His-42 is the Proton donor of the active site. 300-306 (ATTGRSR) provides a ligand contact to substrate. GTP-binding positions include Arg-306, 332–334 (KLD), and 415–417 (STG).

It belongs to the adenylosuccinate synthetase family. In terms of assembly, homodimer. It depends on Mg(2+) as a cofactor.

Its subcellular location is the cytoplasm. The catalysed reaction is IMP + L-aspartate + GTP = N(6)-(1,2-dicarboxyethyl)-AMP + GDP + phosphate + 2 H(+). Its pathway is purine metabolism; AMP biosynthesis via de novo pathway; AMP from IMP: step 1/2. Plays an important role in the de novo pathway of purine nucleotide biosynthesis. Catalyzes the first committed step in the biosynthesis of AMP from IMP. The polypeptide is Adenylosuccinate synthetase (Yersinia enterocolitica serotype O:8 / biotype 1B (strain NCTC 13174 / 8081)).